Here is a 241-residue protein sequence, read N- to C-terminus: Biosynthetic peptidoglycan transglycosylase (241 aa).

The chain crosses the membrane as a helical span at residues 18-38 (GVIGIIALWMAGILIFAFLPV).

Belongs to the glycosyltransferase 51 family.

The protein localises to the cell inner membrane. The enzyme catalyses [GlcNAc-(1-&gt;4)-Mur2Ac(oyl-L-Ala-gamma-D-Glu-L-Lys-D-Ala-D-Ala)](n)-di-trans,octa-cis-undecaprenyl diphosphate + beta-D-GlcNAc-(1-&gt;4)-Mur2Ac(oyl-L-Ala-gamma-D-Glu-L-Lys-D-Ala-D-Ala)-di-trans,octa-cis-undecaprenyl diphosphate = [GlcNAc-(1-&gt;4)-Mur2Ac(oyl-L-Ala-gamma-D-Glu-L-Lys-D-Ala-D-Ala)](n+1)-di-trans,octa-cis-undecaprenyl diphosphate + di-trans,octa-cis-undecaprenyl diphosphate + H(+). Its pathway is cell wall biogenesis; peptidoglycan biosynthesis. Its function is as follows. Peptidoglycan polymerase that catalyzes glycan chain elongation from lipid-linked precursors. The sequence is that of Biosynthetic peptidoglycan transglycosylase from Yersinia pestis bv. Antiqua (strain Antiqua).